A 239-amino-acid chain; its full sequence is tRNA1(Val) (adenine(37)-N6)-methyltransferase (239 aa).

It belongs to the methyltransferase superfamily. tRNA (adenine-N(6)-)-methyltransferase family.

It localises to the cytoplasm. It catalyses the reaction adenosine(37) in tRNA1(Val) + S-adenosyl-L-methionine = N(6)-methyladenosine(37) in tRNA1(Val) + S-adenosyl-L-homocysteine + H(+). Specifically methylates the adenine in position 37 of tRNA(1)(Val) (anticodon cmo5UAC). The sequence is that of tRNA1(Val) (adenine(37)-N6)-methyltransferase from Vibrio parahaemolyticus serotype O3:K6 (strain RIMD 2210633).